We begin with the raw amino-acid sequence, 322 residues long: Lipoyl synthase (322 aa).

Positions 61, 66, 72, 87, 91, 94, and 300 each coordinate [4Fe-4S] cluster. One can recognise a Radical SAM core domain in the interval 73 to 289; the sequence is WDKKHATFMI…ETVAYTKGFL (217 aa).

The protein belongs to the radical SAM superfamily. Lipoyl synthase family. [4Fe-4S] cluster serves as cofactor.

It is found in the cytoplasm. The catalysed reaction is [[Fe-S] cluster scaffold protein carrying a second [4Fe-4S](2+) cluster] + N(6)-octanoyl-L-lysyl-[protein] + 2 oxidized [2Fe-2S]-[ferredoxin] + 2 S-adenosyl-L-methionine + 4 H(+) = [[Fe-S] cluster scaffold protein] + N(6)-[(R)-dihydrolipoyl]-L-lysyl-[protein] + 4 Fe(3+) + 2 hydrogen sulfide + 2 5'-deoxyadenosine + 2 L-methionine + 2 reduced [2Fe-2S]-[ferredoxin]. It participates in protein modification; protein lipoylation via endogenous pathway; protein N(6)-(lipoyl)lysine from octanoyl-[acyl-carrier-protein]: step 2/2. Functionally, catalyzes the radical-mediated insertion of two sulfur atoms into the C-6 and C-8 positions of the octanoyl moiety bound to the lipoyl domains of lipoate-dependent enzymes, thereby converting the octanoylated domains into lipoylated derivatives. The protein is Lipoyl synthase of Rhizobium meliloti (strain 1021) (Ensifer meliloti).